Here is a 257-residue protein sequence, read N- to C-terminus: AT-hook motif nuclear-localized protein 16 (257 aa).

The interval 1-71 (MAGGTALTPT…SKNKPKPPII (71 aa)) is disordered. A DNA-binding region (a.T hook) is located at residues 53–65 (KRPRGRPAGSKNK). Residues 77–214 (PNSLRANAVE…DEAASMQNQQ (138 aa)) form the PPC domain.

Interacts with FVE/MSI4 and MSI5 which are components of HDAC corepressor complexes. As to expression, preferentially expressed in the inflorescence meristem and young floral buds, as well as in seedling-stage vegetative meristems. Widely expressed in flowers, roots and stems, with relatively low expression in leaves.

Its subcellular location is the nucleus. In terms of biological role, transcription factor that specifically binds AT-rich DNA sequences related to the nuclear matrix attachment regions (MARs). Encodes a nuclear matrix protein that acts in the maintenance of genomic integrity by silencing TEs and repeat-containing genes through epigenetic machinery. Acts as a chromatin remodeling factor that modifies the architecture of FLC and FWA chromatin by modulating both H3 acetylation and methylation leading to the regulation of FLC and FWA expression. Negatively regulates floral repressors including MAF4 and MAF5. Plays a transcription activation role in anther development. Regulates the expression of arabinogalactan proteins (AGPs) involved in the formation of the nexine layer of the pollen wall. Binds AGP6, AGP11, AGP23 and AGP40 promoters. This chain is AT-hook motif nuclear-localized protein 16, found in Arabidopsis thaliana (Mouse-ear cress).